The chain runs to 106 residues: Large ribosomal subunit protein eL42 (106 aa).

It belongs to the eukaryotic ribosomal protein eL42 family.

The chain is Large ribosomal subunit protein eL42 (RPL44) from Meyerozyma guilliermondii (strain ATCC 6260 / CBS 566 / DSM 6381 / JCM 1539 / NBRC 10279 / NRRL Y-324) (Yeast).